A 257-amino-acid polypeptide reads, in one-letter code: Receptor expression-enhancing protein 4 (257 aa).

2 consecutive transmembrane segments (helical) span residues 1–21 (MVSWMICRLVVLIFGMLYPAY) and 42–62 (WIVFAIFMAAETFTDIFISWF). Ser152 and Ser194 each carry phosphoserine. Residues 177-257 (VPRRRPPIGY…KKAMPSDMDS (81 aa)) form a disordered region. The residue at position 196 (Thr196) is a Phosphothreonine. Ser202 and Ser253 each carry phosphoserine.

Belongs to the DP1 family.

Its subcellular location is the endoplasmic reticulum membrane. Functionally, microtubule-binding protein required to ensure proper cell division and nuclear envelope reassembly by sequestering the endoplasmic reticulum away from chromosomes during mitosis. Probably acts by clearing the endoplasmic reticulum membrane from metaphase chromosomes. In Mus musculus (Mouse), this protein is Receptor expression-enhancing protein 4 (Reep4).